Here is a 332-residue protein sequence, read N- to C-terminus: L-lactate dehydrogenase A chain (332 aa).

At Ala-2 the chain carries N-acetylalanine. The residue at position 5 (Lys-5) is an N6-acetyllysine; alternate. Residue Lys-5 is modified to N6-succinyllysine; alternate. An N6-acetyllysine modification is found at Lys-14. Thr-18 carries the post-translational modification Phosphothreonine. 29–57 (GAVGMACAISILMKDLADELALVDVIEDK) is an NAD(+) binding site. Residue Lys-57 is modified to N6-acetyllysine; alternate. Residue Lys-57 forms a Glycyl lysine isopeptide (Lys-Gly) (interchain with G-Cter in SUMO2); alternate linkage. Lys-81 is subject to N6-acetyllysine. Arg-99 lines the NAD(+) pocket. Residue Arg-106 participates in substrate binding. Residue Lys-118 is modified to N6-acetyllysine; alternate. The residue at position 118 (Lys-118) is an N6-succinyllysine; alternate. Lys-126 carries the N6-acetyllysine modification. Residues Asn-138 and Arg-169 each coordinate substrate. His-193 functions as the Proton acceptor in the catalytic mechanism. Residues Lys-224 and Lys-232 each carry the N6-acetyllysine modification. Tyr-239 carries the post-translational modification Phosphotyrosine. N6-acetyllysine is present on Lys-243. Thr-248 lines the substrate pocket. Position 309 is a phosphothreonine (Thr-309). The residue at position 310 (Ser-310) is a Phosphoserine. N6-acetyllysine; alternate is present on Lys-318. At Lys-318 the chain carries N6-succinyllysine; alternate. The residue at position 322 (Thr-322) is a Phosphothreonine.

The protein belongs to the LDH/MDH superfamily. LDH family. Homotetramer. Interacts with PTEN upstream reading frame protein MP31. ISGylated.

It localises to the cytoplasm. The catalysed reaction is (S)-lactate + NAD(+) = pyruvate + NADH + H(+). It participates in fermentation; pyruvate fermentation to lactate; (S)-lactate from pyruvate: step 1/1. Functionally, interconverts simultaneously and stereospecifically pyruvate and lactate with concomitant interconversion of NADH and NAD(+). This is L-lactate dehydrogenase A chain (LDHA) from Pongo abelii (Sumatran orangutan).